The sequence spans 580 residues: Mucin-1 (580 aa).

The N-terminal stretch at 1-22 (MTPDIQAPFLSLLLLFPVLTVA) is a signal peptide. Topologically, residues 23–489 (NVPTLTTSDS…GSGVPGWGIA (467 aa)) are extracellular. A compositionally biased stretch (polar residues) spans 28–37 (TTSDSINPRR). Residues 28–359 (TTSDSINPRR…SIALSTSSNP (332 aa)) form a disordered region. Positions 38 to 88 (TTPVSTTQSSPTSSPTKETSWSTTTTLLTASSPAPSPAASPGHDGASTPTS) are enriched in low complexity. 11 tandem repeats follow at residues 70 to 89 (PAPS…PTSS), 90 to 109 (PAPS…PTSS), 110 to 129 (PAPS…PTSS), 130 to 149 (PAPS…PTSS), 150 to 169 (PAPS…PTGS), 170 to 189 (PAPS…PTSS), 190 to 209 (PAPS…PTGS), 210 to 229 (PAPS…PTSS), 230 to 249 (PAPS…PTGS), 250 to 269 (PAPS…LTSS), and 270 to 289 (PAPS…PTSS). An 11 X 20 AA approximate tandem repeats of P-A-P-S-P-A-A-S-P-G-H-D-G-A-S-T-P-T-S-S region spans residues 70–289 (PAPSPAASPG…QHGASSPTSS (220 aa)). 3 O-linked (GalNAc...) serine glycosylation sites follow: serine 73, serine 77, and serine 84. Residues threonine 85 and threonine 87 are each glycosylated (O-linked (GalNAc...) threonine). Residues serine 88 and serine 89 are each glycosylated (O-linked (GalNAc...) serine). Low complexity-rich tracts occupy residues 96 to 108 (ASPG…TPTS), 116 to 128 (ASPG…TPTS), 136 to 148 (ASPG…TPTS), 156 to 168 (ASPG…SPTG), 176 to 188 (ASPG…TPTS), 196 to 208 (ASPG…SPTG), 216 to 228 (ASPG…TPTS), 236 to 248 (ASPG…SPTG), and 256 to 306 (ASPG…MVTS). Asparagine 161 carries N-linked (GlcNAc...) asparagine glycosylation. Asparagine 201 carries N-linked (GlcNAc...) asparagine glycosylation. N-linked (GlcNAc...) asparagine glycosylation is present at asparagine 241. The segment covering 308-344 (HKGTSSRATMTPVSKGTPSSVPSSETAPTAASHITRT) has biased composition (polar residues). The span at 345 to 357 (AASSPSIALSTSS) shows a compositional bias: low complexity. Positions 368–475 (RVSLYFLSFR…VSVYSAPFPS (108 aa)) constitute an SEA domain. Residues asparagine 384 and asparagine 460 are each glycosylated (N-linked (GlcNAc...) asparagine). A helical transmembrane segment spans residues 490 to 510 (LLVLVCVLVALAIIYLIALVV). 2 S-palmitoyl cysteine lipidation sites follow: cysteine 511 and cysteine 513. Residues 511–580 (CQCGRKKCEQ…TNLAATSANL (70 aa)) are Cytoplasmic-facing. The segment at 519 to 555 (EQLDVFPTLDAYHPMSEYSTYHTHGRYVPPGSTKRSP) is interaction with P53. Tyrosine 530 carries the phosphotyrosine; by PDGFR modification. Residues 530–533 (YHPM) carry the Interaction with GRB2 motif. Phosphotyrosine is present on tyrosine 539. The segment at 544-563 (RYVPPGSTKRSPYEEVSAGN) is disordered. Tyrosine 545 carries the phosphotyrosine; by PDGFR modification. Positions 550–557 (STKRSPYE) are required for interaction with GSK3B. Threonine 551 bears the Phosphothreonine; by PKC/PRKCD mark. Position 554 is a phosphoserine; by GSK3-beta (serine 554). Phosphotyrosine; by CSK, EGFR and SRC is present on tyrosine 556. Positions 556-559 (YEEV) match the Interaction with SRC and ESR1 motif. Residues 560 to 568 (SAGNGGSNL) are required for interaction with beta- and gamma-catenins. Position 570 is a phosphotyrosine (tyrosine 570). A Required for interaction with AP1S2 motif is present at residues 570 to 572 (YTN).

The alpha subunit forms a tight, non-covalent heterodimeric complex with the proteolytically-released beta subunit. Binds directly the SH2 domain of GRB2, and forms a MUC1/GRB2/SOS1 complex involved in RAS signaling. The cytoplasmic tail (MUC1CT) interacts with several proteins such as, SRC, CTNNB1 and ERBs. Interaction with the SH2 domain of CSK decreases interaction with GSK3B. Interacts with CTNNB1/beta-catenin and JUP/gamma-catenin and promotes cell adhesion. Interaction with JUP/gamma-catenin is induced by heregulin. Binds PRKCD, ERBB2, ERBB3 and ERBB4. Heregulin (HRG) stimulates the interaction with ERBB2 and, to a much lesser extent, the interaction with ERBB3 and ERBB4. Interacts with P53 in response to DNA damage. Interacts with KLF4. Interacts with estrogen receptor alpha/ESR1, through its DNA-binding domain, and stimulates its transcription activity. Binds ADAM17. Post-translationally, highly glycosylated (N- and O-linked carbohydrates and sialic acid). O-linked glycosylation consists mainly of GalNAc, galactose, and sialic acid. The ratio from pools of milk from different dairy breeds is GalNAc: GlcNAc:galactose:mannose:sialic acid is 14:1:10:1:15. Proteolytic cleavage in the SEA domain occurs in the endoplasmic reticulum by an autoproteolytic mechanism and requires the full-length SEA domain as well as requiring a Ser, Thr or Cys residue at the P + 1 site. Ectodomain shedding is mediated by ADAM17 in uterine epithelial cells. In terms of processing, dual palmitoylation on cysteine residues in the CQC motif is required for recycling from endosomes back to the plasma membrane. Post-translationally, phosphorylated on tyrosines and serine residues in the C-terminal. Phosphorylation on tyrosines in the C-terminal increases the nuclear location of MUC1 and beta-catenin. Phosphorylation by PKC delta induces binding of MUC1 to beta-catenin/CTNNB1 and thus decreases the formation of the beta-catenin/E-cadherin complex. Src-mediated phosphorylation inhibits interaction with GSK3B. Csk- or Src- or EGFR-mediated phosphorylation on Tyr-556 increases binding to beta-catenin/CTNNB1. GSK3B-mediated phosphorylation on Ser-554 decreases this interaction but restores the formation of the beta-cadherin/E-cadherin complex. On T-cell receptor activation, phosphorylated by LCK. PDGFR-mediated phosphorylation increases nuclear colocalization of MUC1CT and CTNNB1. Expressed on the apical surface of epithelia cells, and on the milk fat globule membrane (MGGM).

It localises to the apical cell membrane. The protein localises to the cell membrane. Its subcellular location is the cytoplasm. It is found in the nucleus. Its function is as follows. The alpha subunit has cell adhesive properties. May provide a protective layer on epithelial cells against bacterial and enzyme attack. Functionally, the beta subunit contains a C-terminal domain which is involved in cell signaling, through phosphorylations and protein-protein interactions. Modulates signaling in ERK, Src and NF-kappa-B pathways. In activated T-cells, influences directly or indirectly the Ras/MAPK pathway. Promotes tumor progression. Regulates P53-mediated transcription and determines cell fate in the genotoxic stress response. Binds, together with KLF4, the PE21 promoter element of P53 and represses P53 activity. The polypeptide is Mucin-1 (MUC1) (Bos taurus (Bovine)).